A 205-amino-acid polypeptide reads, in one-letter code: Protein-L-isoaspartate O-methyltransferase (205 aa).

Ser-56 is a catalytic residue.

The protein belongs to the methyltransferase superfamily. L-isoaspartyl/D-aspartyl protein methyltransferase family.

The protein localises to the cytoplasm. The enzyme catalyses [protein]-L-isoaspartate + S-adenosyl-L-methionine = [protein]-L-isoaspartate alpha-methyl ester + S-adenosyl-L-homocysteine. In terms of biological role, catalyzes the methyl esterification of L-isoaspartyl residues in peptides and proteins that result from spontaneous decomposition of normal L-aspartyl and L-asparaginyl residues. It plays a role in the repair and/or degradation of damaged proteins. The chain is Protein-L-isoaspartate O-methyltransferase from Aeromonas salmonicida (strain A449).